The following is a 188-amino-acid chain: D-glycero-beta-D-manno-heptose-1,7-bisphosphate 7-phosphatase (188 aa).

Catalysis depends on aspartate 11, which acts as the Nucleophile. Mg(2+)-binding residues include aspartate 11 and aspartate 13. Residues 11 to 13, 19 to 22, and 53 to 56 each bind substrate; these read DRD, DHGY, and TNQS. Aspartate 13 serves as the catalytic Proton donor. Zn(2+) contacts are provided by cysteine 92, histidine 94, cysteine 107, and cysteine 109. Position 110-111 (110-111) interacts with substrate; that stretch reads RK. Positions 136 and 137 each coordinate Mg(2+). Residue lysine 137 coordinates substrate.

The protein belongs to the GmhB family. As to quaternary structure, monomer. The cofactor is Mg(2+). It depends on Zn(2+) as a cofactor.

It is found in the cytoplasm. The enzyme catalyses D-glycero-beta-D-manno-heptose 1,7-bisphosphate + H2O = D-glycero-beta-D-manno-heptose 1-phosphate + phosphate. It functions in the pathway nucleotide-sugar biosynthesis; ADP-L-glycero-beta-D-manno-heptose biosynthesis; ADP-L-glycero-beta-D-manno-heptose from D-glycero-beta-D-manno-heptose 7-phosphate: step 2/4. It participates in bacterial outer membrane biogenesis; LPS core biosynthesis. Converts the D-glycero-beta-D-manno-heptose 1,7-bisphosphate intermediate into D-glycero-beta-D-manno-heptose 1-phosphate by removing the phosphate group at the C-7 position. The chain is D-glycero-beta-D-manno-heptose-1,7-bisphosphate 7-phosphatase (gmhB) from Yersinia pestis.